Consider the following 194-residue polypeptide: Large ribosomal subunit protein uL6x (194 aa).

T75 bears the Phosphothreonine mark.

The protein belongs to the universal ribosomal protein uL6 family.

The chain is Large ribosomal subunit protein uL6x (RPL9D) from Arabidopsis thaliana (Mouse-ear cress).